Reading from the N-terminus, the 136-residue chain is Small ribosomal subunit protein uS19 (136 aa).

The protein belongs to the universal ribosomal protein uS19 family.

Protein S19 forms a complex with S13 that binds strongly to the 16S ribosomal RNA. The sequence is that of Small ribosomal subunit protein uS19 from Methanocorpusculum labreanum (strain ATCC 43576 / DSM 4855 / Z).